A 117-amino-acid polypeptide reads, in one-letter code: UPF0145 protein PH1682 (117 aa).

This sequence belongs to the UPF0145 family.

This is UPF0145 protein PH1682 from Pyrococcus horikoshii (strain ATCC 700860 / DSM 12428 / JCM 9974 / NBRC 100139 / OT-3).